The chain runs to 406 residues: Putative ankyrin repeat protein RF_0266 (406 aa).

ANK repeat units lie at residues 68–98 (TSHS…DINN), 103–129 (NYIT…QDDI), 130–161 (KVQN…IIKP), 163–189 (HIEL…DIEK), and 203–232 (SIDC…KPEQ).

This is Putative ankyrin repeat protein RF_0266 from Rickettsia felis (strain ATCC VR-1525 / URRWXCal2) (Rickettsia azadi).